The sequence spans 311 residues: Aspartate carbamoyltransferase catalytic subunit (311 aa).

Carbamoyl phosphate-binding residues include R55 and T56. K85 serves as a coordination point for L-aspartate. Positions 106, 135, and 138 each coordinate carbamoyl phosphate. L-aspartate contacts are provided by R168 and R230. Carbamoyl phosphate is bound by residues L268 and P269.

This sequence belongs to the aspartate/ornithine carbamoyltransferase superfamily. ATCase family. In terms of assembly, heterododecamer (2C3:3R2) of six catalytic PyrB chains organized as two trimers (C3), and six regulatory PyrI chains organized as three dimers (R2).

It catalyses the reaction carbamoyl phosphate + L-aspartate = N-carbamoyl-L-aspartate + phosphate + H(+). It functions in the pathway pyrimidine metabolism; UMP biosynthesis via de novo pathway; (S)-dihydroorotate from bicarbonate: step 2/3. Its function is as follows. Catalyzes the condensation of carbamoyl phosphate and aspartate to form carbamoyl aspartate and inorganic phosphate, the committed step in the de novo pyrimidine nucleotide biosynthesis pathway. The chain is Aspartate carbamoyltransferase catalytic subunit from Escherichia coli (strain 55989 / EAEC).